Consider the following 301-residue polypeptide: N-acetylmuramic acid 6-phosphate etherase (301 aa).

Positions 57-220 (IAETFMKNGR…TTGAMIKTGK (164 aa)) constitute an SIS domain. Residue glutamate 85 is the Proton donor of the active site. Glutamate 116 is an active-site residue.

Belongs to the GCKR-like family. MurNAc-6-P etherase subfamily. In terms of assembly, homodimer.

The catalysed reaction is N-acetyl-D-muramate 6-phosphate + H2O = N-acetyl-D-glucosamine 6-phosphate + (R)-lactate. Its pathway is amino-sugar metabolism; 1,6-anhydro-N-acetylmuramate degradation. The protein operates within amino-sugar metabolism; N-acetylmuramate degradation. It participates in cell wall biogenesis; peptidoglycan recycling. Functionally, specifically catalyzes the cleavage of the D-lactyl ether substituent of MurNAc 6-phosphate, producing GlcNAc 6-phosphate and D-lactate. Together with AnmK, is also required for the utilization of anhydro-N-acetylmuramic acid (anhMurNAc) either imported from the medium or derived from its own cell wall murein, and thus plays a role in cell wall recycling. The polypeptide is N-acetylmuramic acid 6-phosphate etherase (Pasteurella multocida (strain Pm70)).